A 256-amino-acid chain; its full sequence is 5-keto-4-deoxy-D-glucarate aldolase (256 aa).

The Proton acceptor role is filled by His50. Gln151 contributes to the substrate binding site. Glu153 provides a ligand contact to Mg(2+). 2 residues coordinate substrate: Ser178 and Asp179. Residue Asp179 participates in Mg(2+) binding.

The protein belongs to the HpcH/HpaI aldolase family. KDGluc aldolase subfamily. Homohexamer; trimer of dimers. Mg(2+) serves as cofactor.

It catalyses the reaction 5-dehydro-4-deoxy-D-glucarate = 2-hydroxy-3-oxopropanoate + pyruvate. The enzyme catalyses 2-dehydro-3-deoxy-D-glucarate = 2-hydroxy-3-oxopropanoate + pyruvate. Its pathway is carbohydrate acid metabolism; galactarate degradation; D-glycerate from galactarate: step 2/3. Catalyzes the reversible retro-aldol cleavage of both 5-keto-4-deoxy-D-glucarate and 2-keto-3-deoxy-D-glucarate to pyruvate and tartronic semialdehyde. This chain is 5-keto-4-deoxy-D-glucarate aldolase, found in Shigella sonnei (strain Ss046).